The following is a 206-amino-acid chain: MSRTLVLVRHGQSEWNLKNLFTGWRDVDLTEQGHAEAKAAGQKLKARGLKFDIAFTSALSRAQKTCQHILDAVGQSDLKTIRDQALNERDYGDLSGLNKDDARKKWGEEQVHVWRRSYDVSPPGGESLKDTGARVWPYYLHDLQPHVLRGGTVLVAAHGNSLRALIMALDGKSGEEIVKLELGTGVPVIYQLNADSTVASKEVLEG.

Substrate contacts are provided by residues 9 to 16, 22 to 23, R61, 88 to 91, K99, 115 to 116, and 159 to 160; these read RHGQSEWN, TG, ERDY, RR, and GN. H10 acts as the Tele-phosphohistidine intermediate in catalysis. E88 functions as the Proton donor/acceptor in the catalytic mechanism.

The protein belongs to the phosphoglycerate mutase family. BPG-dependent PGAM subfamily. In terms of assembly, homodimer.

The enzyme catalyses (2R)-2-phosphoglycerate = (2R)-3-phosphoglycerate. The protein operates within carbohydrate degradation; glycolysis; pyruvate from D-glyceraldehyde 3-phosphate: step 3/5. In terms of biological role, catalyzes the interconversion of 2-phosphoglycerate and 3-phosphoglycerate. The polypeptide is 2,3-bisphosphoglycerate-dependent phosphoglycerate mutase (Mesorhizobium japonicum (strain LMG 29417 / CECT 9101 / MAFF 303099) (Mesorhizobium loti (strain MAFF 303099))).